The sequence spans 67 residues: uncharacterized protein (67 aa).

2 helical membrane-spanning segments follow: residues 6–26 (GQLWIVFMWVSGVVCGICVLM) and 38–58 (NNIIIIIIIIMMIKIMKIIII).

The protein resides in the membrane. This is an uncharacterized protein from Dictyostelium discoideum (Social amoeba).